A 204-amino-acid polypeptide reads, in one-letter code: HTH-type transcriptional repressor KstR2 (204 aa).

Residues 13–73 (SGRRTELLDI…EILRGFLDDL (61 aa)) enclose the HTH tetR-type domain. A DNA-binding region (H-T-H motif) is located at residues 36-55 (TVRDIADAAGILSGSLYHHF).

In terms of assembly, homodimer.

In terms of biological role, controls the expression of a small regulon that may play a role in the utilization of cholesterol. The sequence is that of HTH-type transcriptional repressor KstR2 (kstR2) from Rhodococcus jostii (strain RHA1).